The chain runs to 237 residues: Phosphoribosylaminoimidazole-succinocarboxamide synthase (237 aa).

The protein belongs to the SAICAR synthetase family.

The catalysed reaction is 5-amino-1-(5-phospho-D-ribosyl)imidazole-4-carboxylate + L-aspartate + ATP = (2S)-2-[5-amino-1-(5-phospho-beta-D-ribosyl)imidazole-4-carboxamido]succinate + ADP + phosphate + 2 H(+). The protein operates within purine metabolism; IMP biosynthesis via de novo pathway; 5-amino-1-(5-phospho-D-ribosyl)imidazole-4-carboxamide from 5-amino-1-(5-phospho-D-ribosyl)imidazole-4-carboxylate: step 1/2. The sequence is that of Phosphoribosylaminoimidazole-succinocarboxamide synthase from Erwinia tasmaniensis (strain DSM 17950 / CFBP 7177 / CIP 109463 / NCPPB 4357 / Et1/99).